The primary structure comprises 340 residues: Arginase 1, mitochondrial (340 aa).

Residues M1–T24 constitute a mitochondrion transit peptide. The Mn(2+) site is built by H159, D183, H185, and D187. Substrate contacts are provided by residues H185–Y189 and E193–N195. Mn(2+) contacts are provided by D268 and D270. A substrate-binding site is contributed by E311.

The protein belongs to the arginase family. It depends on Mn(2+) as a cofactor.

The protein resides in the mitochondrion. It catalyses the reaction L-arginine + H2O = urea + L-ornithine. It functions in the pathway nitrogen metabolism; urea cycle; L-ornithine and urea from L-arginine: step 1/1. Catalyzes the hydrolysis of L-arginine to urea and L-ornithine. The latter can be utilized in the urea cycle or as a precursor for the synthesis of both polyamines and proline. The polypeptide is Arginase 1, mitochondrial (Oryza sativa subsp. indica (Rice)).